The primary structure comprises 620 residues: 1-deoxy-D-xylulose-5-phosphate synthase (620 aa).

Residues histidine 80 and 121–123 each bind thiamine diphosphate; that span reads GHS. Aspartate 152 lines the Mg(2+) pocket. Residues 153–154, asparagine 181, tyrosine 288, and glutamate 370 each bind thiamine diphosphate; that span reads GA. A Mg(2+)-binding site is contributed by asparagine 181.

The protein belongs to the transketolase family. DXPS subfamily. Homodimer. It depends on Mg(2+) as a cofactor. Thiamine diphosphate is required as a cofactor.

It carries out the reaction D-glyceraldehyde 3-phosphate + pyruvate + H(+) = 1-deoxy-D-xylulose 5-phosphate + CO2. It participates in metabolic intermediate biosynthesis; 1-deoxy-D-xylulose 5-phosphate biosynthesis; 1-deoxy-D-xylulose 5-phosphate from D-glyceraldehyde 3-phosphate and pyruvate: step 1/1. Functionally, catalyzes the acyloin condensation reaction between C atoms 2 and 3 of pyruvate and glyceraldehyde 3-phosphate to yield 1-deoxy-D-xylulose-5-phosphate (DXP). In Escherichia coli (strain K12 / MC4100 / BW2952), this protein is 1-deoxy-D-xylulose-5-phosphate synthase.